We begin with the raw amino-acid sequence, 1078 residues long: Disheveled-associated activator of morphogenesis 1 (1078 aa).

The residue at position 34 (Ser-34) is a Phosphoserine. The region spanning Leu-45–Gln-420 is the GBD/FH3 domain. The stretch at Arg-437–Ser-526 forms a coiled coil. Disordered stretches follow at residues Arg-456 to Lys-480 and Cys-524 to Ala-585. The region spanning Pro-528 to Lys-599 is the FH1 domain. 2 stretches are compositionally biased toward pro residues: residues Gly-530–Pro-539 and Leu-548–Ala-585. An FH2 domain is found at Lys-600–Gln-1009. Residues Ala-693–Arg-702 are actin-binding. The segment covering Lys-987 to Ser-1027 has biased composition (basic and acidic residues). Disordered stretches follow at residues Lys-987 to Asp-1034 and Arg-1055 to Phe-1078. 2 positions are modified to phosphoserine: Ser-1027 and Ser-1030. A DAD domain is found at Ser-1027 to Lys-1058. Residues Ser-1067–Phe-1078 show a composition bias toward basic and acidic residues.

It belongs to the formin homology family. As to quaternary structure, homodimer. Interacts with CIP4, FNBP1 and FNBP1L. Interacts with the SH3 domains of Abl, BTK, endophilin, spectrin and SRC. Binds specifically to GTP-bound CDC42 and RHOA. Interacts with INTU; INTU mediates the indirect interaction between DAAM1 and NPHP4. Interacts (via coiled coil domain) with KANK1 (via coiled coil domain). In terms of tissue distribution, expressed in all tissues examined.

It is found in the cytoplasm. It localises to the cytoskeleton. Its subcellular location is the cilium basal body. Functionally, binds to disheveled (Dvl) and Rho, and mediates Wnt-induced Dvl-Rho complex formation. May play a role as a scaffolding protein to recruit Rho-GDP and Rho-GEF, thereby enhancing Rho-GTP formation. Can direct nucleation and elongation of new actin filaments. Involved in building functional cilia. Involved in the organization of the subapical actin network in multiciliated epithelial cells. Together with DAAM2, required for myocardial maturation and sarcomere assembly. During cell division, may regulate RHOA activation that signals spindle orientation and chromosomal segregation. The chain is Disheveled-associated activator of morphogenesis 1 (DAAM1) from Homo sapiens (Human).